The following is a 547-amino-acid chain: bZIP transcription factor 29 (547 aa).

Disordered regions lie at residues 1–199 (MGDT…SGGE), 244–312 (NSSE…DIAP), and 333–356 (GDES…TNSV). Polar residues predominate over residues 15–52 (LHSSFGTTSSSIPKNPISQLDLNPNFIRSSAPQFSKPF). Over residues 63–73 (PSHPNLIPPTS) the composition is skewed to pro residues. Over residues 74–89 (PFSQIPTTRQPGSHNF) the composition is skewed to polar residues. A compositionally biased stretch (basic and acidic residues) spans 120-132 (FRDHDVSMEDRDS). Residues 134–157 (VFNSNHSLPPSPFTRCNSTSSSSL) show a composition bias toward polar residues. A compositionally biased stretch (basic and acidic residues) spans 249 to 263 (DDSKNGNENRDDMES). Positions 264–275 (SRASGTKTNGSD) are enriched in polar residues. The span at 279–294 (ESSSVNESANNNMNSS) shows a compositional bias: low complexity. Positions 344–356 (GSMSRKVSPTNSV) are enriched in polar residues. In terms of domain architecture, bZIP spans 394 to 457 (DPKRVKRILA…MGLTNQNNEL (64 aa)). A basic motif region spans residues 396–417 (KRVKRILANRQSAARSKERKMR). The stretch at 416 to 469 (MRYIVELEHKVQTLQTEATTLSAQLTLLQRDMMGLTNQNNELKFRLQAMEQQAR) forms a coiled coil. A leucine-zipper region spans residues 422 to 457 (LEHKVQTLQTEATTLSAQLTLLQRDMMGLTNQNNEL). The span at 517 to 535 (QLRQQPQQMQQQSHQQNHQ) shows a compositional bias: low complexity. The tract at residues 517–547 (QLRQQPQQMQQQSHQQNHQNGTMATKSESNE) is disordered. Polar residues predominate over residues 536–547 (NGTMATKSESNE).

Forms homodimers. In terms of tissue distribution, expressed in roots, leaves and flowers. Expressed in the root tips, lateral root primordia, and guard cells of leaves, hypocotyls and anthers.

It is found in the cytoplasm. It localises to the nucleus. Its function is as follows. Transcription factor that acts as a repressor of reproductive development, meristem size and plant growth. Regulates meristem size, cell size and cell number during plant development. Binds to the promoters of the cell cycle regulators CYCB1-2 and SMR4, and genes involved in cell wall organization, such as XTH9, EXPA1 and EXPA3. Possesses transactivation activity in yeast. Possesses transactivation activity in plant protoplasts. Plays a role in abiotic stress response by binding to the 5'-CAGCTG-3' DNA sequence found in the promoters of MYB44 and TRX8. Plays a role in osmosensory response by binding to the 5'-AGCTGT/G-3' DNA sequence found in the promoters of the hypoosmolarity-responsive genes CYP707A1 and CYP707A3. Binds to the 5'-AGCTGT-3' DNA sequence found in the promoter of the ZAT1 gene in response to abiotic stresses, such as oxidative stress, high-light, osmotic shock, salt and heat stresses. The polypeptide is bZIP transcription factor 29 (Arabidopsis thaliana (Mouse-ear cress)).